Here is a 407-residue protein sequence, read N- to C-terminus: Peptidase T (407 aa).

His-82 is a Zn(2+) binding site. Residue Asp-84 is part of the active site. Asp-143 serves as a coordination point for Zn(2+). The active-site Proton acceptor is Glu-177. Positions 178, 200, and 382 each coordinate Zn(2+).

The protein belongs to the peptidase M20B family. Zn(2+) is required as a cofactor.

It localises to the cytoplasm. The catalysed reaction is Release of the N-terminal residue from a tripeptide.. Functionally, cleaves the N-terminal amino acid of tripeptides. The chain is Peptidase T from Streptococcus uberis (strain ATCC BAA-854 / 0140J).